The sequence spans 78 residues: Large ribosomal subunit protein bL28 (78 aa).

The protein belongs to the bacterial ribosomal protein bL28 family.

The polypeptide is Large ribosomal subunit protein bL28 (Synechococcus sp. (strain CC9605)).